Here is a 224-residue protein sequence, read N- to C-terminus: Orotate phosphoribosyltransferase (224 aa).

5-phospho-alpha-D-ribose 1-diphosphate-binding positions include Lys26, 73-74, Arg100, Lys101, Lys104, His106, and 127-135; these read YK and EDVTTAGTS. Orotate contacts are provided by Thr131 and Arg160.

The protein belongs to the purine/pyrimidine phosphoribosyltransferase family. PyrE subfamily. In terms of assembly, homodimer. Requires Mg(2+) as cofactor.

The enzyme catalyses orotidine 5'-phosphate + diphosphate = orotate + 5-phospho-alpha-D-ribose 1-diphosphate. It participates in pyrimidine metabolism; UMP biosynthesis via de novo pathway; UMP from orotate: step 1/2. Its function is as follows. Catalyzes the transfer of a ribosyl phosphate group from 5-phosphoribose 1-diphosphate to orotate, leading to the formation of orotidine monophosphate (OMP). The polypeptide is Orotate phosphoribosyltransferase (Clostridium acetobutylicum (strain ATCC 824 / DSM 792 / JCM 1419 / IAM 19013 / LMG 5710 / NBRC 13948 / NRRL B-527 / VKM B-1787 / 2291 / W)).